Consider the following 483-residue polypeptide: Betaine aldehyde dehydrogenase (483 aa).

K(+) is bound by residues isoleucine 27 and aspartate 93. 149–151 serves as a coordination point for NAD(+); that stretch reads GAW. Lysine 161 serves as the catalytic Charge relay system. Position 175–178 (175–178) interacts with NAD(+); that stretch reads KPSE. K(+) is bound at residue valine 179. An NAD(+)-binding site is contributed by 228–231; that stretch reads SVPT. Valine 243 provides a ligand contact to K(+). The active-site Proton acceptor is glutamate 249. Residues glycine 251, cysteine 283, and glutamate 380 each coordinate NAD(+). Cysteine 283 acts as the Nucleophile in catalysis. Residue cysteine 283 is modified to Cysteine sulfenic acid (-SOH). K(+)-binding residues include lysine 450 and glycine 453. The active-site Charge relay system is the glutamate 457.

This sequence belongs to the aldehyde dehydrogenase family. As to quaternary structure, dimer of dimers. Requires K(+) as cofactor.

The catalysed reaction is betaine aldehyde + NAD(+) + H2O = glycine betaine + NADH + 2 H(+). It functions in the pathway amine and polyamine biosynthesis; betaine biosynthesis via choline pathway; betaine from betaine aldehyde: step 1/1. Involved in the biosynthesis of the osmoprotectant glycine betaine. Catalyzes the irreversible oxidation of betaine aldehyde to the corresponding acid. The sequence is that of Betaine aldehyde dehydrogenase from Cereibacter sphaeroides (strain ATCC 17025 / ATH 2.4.3) (Rhodobacter sphaeroides).